The sequence spans 345 residues: Phosphoribosylformylglycinamidine cyclo-ligase (345 aa).

It belongs to the AIR synthase family.

The protein resides in the cytoplasm. The catalysed reaction is 2-formamido-N(1)-(5-O-phospho-beta-D-ribosyl)acetamidine + ATP = 5-amino-1-(5-phospho-beta-D-ribosyl)imidazole + ADP + phosphate + H(+). It functions in the pathway purine metabolism; IMP biosynthesis via de novo pathway; 5-amino-1-(5-phospho-D-ribosyl)imidazole from N(2)-formyl-N(1)-(5-phospho-D-ribosyl)glycinamide: step 2/2. The sequence is that of Phosphoribosylformylglycinamidine cyclo-ligase from Salmonella typhi.